Consider the following 214-residue polypeptide: MSQFNPMGGQSTTIQSSLVPIVVEQTARGERSYDIYSRLLKERVIFLVGQVEDHMANLVVAQLLFLEAENPDKDIHLYINSPGGSVTAGMSIYDTMQFIKPDVSTMCIGQACSMGSFLLSAGATGKRFCLPNARTMIHQPSGGAQGQASDIHIHAQEILKIRARLNEIMAKHTGKSVEEVARDTERDNFMSAEESKAYGLVDDVLYQRVPEESK.

The Nucleophile role is filled by S113. Residue H138 is part of the active site.

This sequence belongs to the peptidase S14 family. In terms of assembly, fourteen ClpP subunits assemble into 2 heptameric rings which stack back to back to give a disk-like structure with a central cavity, resembling the structure of eukaryotic proteasomes.

The protein localises to the cytoplasm. The enzyme catalyses Hydrolysis of proteins to small peptides in the presence of ATP and magnesium. alpha-casein is the usual test substrate. In the absence of ATP, only oligopeptides shorter than five residues are hydrolyzed (such as succinyl-Leu-Tyr-|-NHMec, and Leu-Tyr-Leu-|-Tyr-Trp, in which cleavage of the -Tyr-|-Leu- and -Tyr-|-Trp bonds also occurs).. In terms of biological role, cleaves peptides in various proteins in a process that requires ATP hydrolysis. Has a chymotrypsin-like activity. Plays a major role in the degradation of misfolded proteins. The sequence is that of ATP-dependent Clp protease proteolytic subunit from Teredinibacter turnerae (strain ATCC 39867 / T7901).